Consider the following 541-residue polypeptide: Chaperonin GroEL 5 (541 aa).

ATP contacts are provided by residues Thr30–Pro33, Gly415, and Asp496.

Belongs to the chaperonin (HSP60) family. In terms of assembly, forms a cylinder of 14 subunits composed of two heptameric rings stacked back-to-back. Interacts with the co-chaperonin GroES.

It localises to the cytoplasm. The catalysed reaction is ATP + H2O + a folded polypeptide = ADP + phosphate + an unfolded polypeptide.. Its function is as follows. Together with its co-chaperonin GroES, plays an essential role in assisting protein folding. The GroEL-GroES system forms a nano-cage that allows encapsulation of the non-native substrate proteins and provides a physical environment optimized to promote and accelerate protein folding. The sequence is that of Chaperonin GroEL 5 from Bradyrhizobium diazoefficiens (strain JCM 10833 / BCRC 13528 / IAM 13628 / NBRC 14792 / USDA 110).